Here is a 391-residue protein sequence, read N- to C-terminus: Phosphoglycerate kinase (391 aa).

Substrate-binding positions include 21 to 23, arginine 36, 59 to 62, arginine 114, and arginine 147; these read DLN and HLGR. Residues lysine 198, glutamate 315, and 344-347 contribute to the ATP site; that span reads GGDT.

Belongs to the phosphoglycerate kinase family. Monomer.

Its subcellular location is the cytoplasm. The enzyme catalyses (2R)-3-phosphoglycerate + ATP = (2R)-3-phospho-glyceroyl phosphate + ADP. Its pathway is carbohydrate degradation; glycolysis; pyruvate from D-glyceraldehyde 3-phosphate: step 2/5. This Actinobacillus pleuropneumoniae serotype 5b (strain L20) protein is Phosphoglycerate kinase.